Reading from the N-terminus, the 381-residue chain is Spindlin interactor and repressor of chromatin-binding protein (381 aa).

Residue K49 forms a Glycyl lysine isopeptide (Lys-Gly) (interchain with G-Cter in SUMO2) linkage. S122 and S149 each carry phosphoserine. A compositionally biased stretch (polar residues) spans P148–D158. The interval P148–V170 is disordered. Residues K190 and K221 each participate in a glycyl lysine isopeptide (Lys-Gly) (interchain with G-Cter in SUMO2) cross-link. Disordered stretches follow at residues P203 to S270, L285 to T320, and A335 to V381. The segment covering R219–A229 has biased composition (basic and acidic residues). 2 positions are modified to phosphoserine: S249 and S252. A compositionally biased stretch (basic and acidic residues) spans T288–A299. Residues K291 and K295 each participate in a glycyl lysine isopeptide (Lys-Gly) (interchain with G-Cter in SUMO2) cross-link. A compositionally biased stretch (low complexity) spans P304–P315. Phosphoserine is present on residues S310 and S313.

Interacts with SPIN1, SPIN2A, SPIN2B, SPIN3 and SPIN4. Interacts with TCF7L2 in a SPIN1-dependent manner. Interacts with PARP1; promoting PARP1 ADP-ribosyltransferase activity.

Its subcellular location is the nucleus. The protein resides in the chromosome. Functionally, chromatin protein that stabilizes SPIN1 and enhances its association with histone H3 trimethylated at both 'Lys-4' and 'Lys-9' (H3K4me3K9me3). Positively regulates poly-ADP-ribosylation in response to DNA damage; acts by facilitating PARP1 ADP-ribosyltransferase activity. This is Spindlin interactor and repressor of chromatin-binding protein from Mus musculus (Mouse).